The chain runs to 319 residues: Acetyl-coenzyme A carboxylase carboxyl transferase subunit alpha (319 aa).

Residues 38-293 (HALQDKLRLR…KAVLLNELDA (256 aa)) enclose the CoA carboxyltransferase C-terminal domain.

The protein belongs to the AccA family. As to quaternary structure, acetyl-CoA carboxylase is a heterohexamer composed of biotin carboxyl carrier protein (AccB), biotin carboxylase (AccC) and two subunits each of ACCase subunit alpha (AccA) and ACCase subunit beta (AccD).

It is found in the cytoplasm. The catalysed reaction is N(6)-carboxybiotinyl-L-lysyl-[protein] + acetyl-CoA = N(6)-biotinyl-L-lysyl-[protein] + malonyl-CoA. Its pathway is lipid metabolism; malonyl-CoA biosynthesis; malonyl-CoA from acetyl-CoA: step 1/1. Component of the acetyl coenzyme A carboxylase (ACC) complex. First, biotin carboxylase catalyzes the carboxylation of biotin on its carrier protein (BCCP) and then the CO(2) group is transferred by the carboxyltransferase to acetyl-CoA to form malonyl-CoA. The sequence is that of Acetyl-coenzyme A carboxylase carboxyl transferase subunit alpha from Stenotrophomonas maltophilia (strain R551-3).